We begin with the raw amino-acid sequence, 300 residues long: Iron/alpha-ketoglutarate-dependent dioxygenase okaE (300 aa).

Fe cation is bound by residues His134, Asp136, and His210.

Belongs to the PhyH family. In terms of assembly, homodimer. The cofactor is Fe cation.

It carries out the reaction okaramine A + 2-oxoglutarate + AH2 + O2 = 12-deshydroxyl okaramine E + succinate + A + CO2 + H2O. It catalyses the reaction 12-deshydroxyl okaramine E + 2-oxoglutarate + O2 = okaramine E + succinate + CO2. The catalysed reaction is okaramine A + 2-oxoglutarate + O2 = okaramine E + succinate + CO2. It participates in alkaloid biosynthesis. Its pathway is secondary metabolite biosynthesis; terpenoid biosynthesis. Functionally, iron/alpha-ketoglutarate-dependent dioxygenase; part of the gene cluster that mediates the biosynthesis of okaramine B, a prenylated indole alkaloid that possesses an unusual octacyclic ring system, including a four-membered azetidine ring and an eight-membered azocine ring, and that exhibits insecticidal activity against silkworm larvae. Within the pathway, okaE forms the unusual 2-dimethyl-3-methyl-azetidine ring to yield 12-deshydroxyl okaramine E from okaramine A. OkaE also catalyzes the hydroxylation of 12-deshydroxyl okaramine E to produce okaramine E. The biosynthesis begins with the NRPS okaA that condenses two tryptophan molecules into cyclo(L-Trp-L-Trp). Prenylation by the prenyltransferase okaC then leads to the formation of cyclo(N8-(alpha,alpha-dimethylallyl)-L-Trp-6a-(alpha,alpha-dime-thylallyl)-L-Trp). This is followed by indole 2,3-epoxidation by the FAD-dependent monooxygenase okaB to facilitate the formation of the hexahydropyrrolo[2,3-b]indole (HPI) moiety of okaramine C. The cytochrome P450 monooxygenase okaD then likely catalyzes formation of the eight-membered ring of okaramine A. The dioxygenase okaE further forms the unusual 2-dimethyl-3-methyl-azetidine ring to yield 12-deshydroxyl okaramine E, as well as the hydroxylation of 12-deshydroxyl okaramine E to produce okaramine E. The cytochrome P450 monoxygenase okaG converts 12-deshydroxyl okaramine E into 3-desmethyl okaramine B which is further methylated by the methyltransferase okaF into okaramine B. In a shunt pathway, okaG and okaF together are also able to convert okaramine E into okaramine D. Okaramine H is produced by nonenzymatic conversion from okaramine A. This Penicillium ochrochloron protein is Iron/alpha-ketoglutarate-dependent dioxygenase okaE.